The following is a 165-amino-acid chain: Xanthine-guanine phosphoribosyltransferase (165 aa).

5-phospho-alpha-D-ribose 1-diphosphate contacts are provided by residues 41-42 (RG) and 98-106 (DDLTDTGKT). Aspartate 99 lines the Mg(2+) pocket. The guanine site is built by aspartate 102 and isoleucine 145. 2 residues coordinate xanthine: aspartate 102 and isoleucine 145. Residues 102-106 (DTGKT) and 144-145 (WI) contribute to the GMP site.

It belongs to the purine/pyrimidine phosphoribosyltransferase family. XGPT subfamily. As to quaternary structure, homotetramer. It depends on Mg(2+) as a cofactor.

It is found in the cell inner membrane. It catalyses the reaction GMP + diphosphate = guanine + 5-phospho-alpha-D-ribose 1-diphosphate. It carries out the reaction XMP + diphosphate = xanthine + 5-phospho-alpha-D-ribose 1-diphosphate. The enzyme catalyses IMP + diphosphate = hypoxanthine + 5-phospho-alpha-D-ribose 1-diphosphate. It participates in purine metabolism; GMP biosynthesis via salvage pathway; GMP from guanine: step 1/1. It functions in the pathway purine metabolism; XMP biosynthesis via salvage pathway; XMP from xanthine: step 1/1. In terms of biological role, purine salvage pathway enzyme that catalyzes the transfer of the ribosyl-5-phosphate group from 5-phospho-alpha-D-ribose 1-diphosphate (PRPP) to the N9 position of the 6-oxopurines guanine and xanthine to form the corresponding ribonucleotides GMP (guanosine 5'-monophosphate) and XMP (xanthosine 5'-monophosphate), with the release of PPi. To a lesser extent, also acts on hypoxanthine. The chain is Xanthine-guanine phosphoribosyltransferase from Chelativorans sp. (strain BNC1).